Consider the following 395-residue polypeptide: Outer membrane protein assembly factor BamB (395 aa).

The signal sequence occupies residues 1 to 20 (MKSWCKNLLAAGLSLAMLSA). C21 carries the N-palmitoyl cysteine lipid modification. The S-diacylglycerol cysteine moiety is linked to residue C21.

The protein belongs to the BamB family. As to quaternary structure, part of the Bam complex.

It localises to the cell outer membrane. Part of the outer membrane protein assembly complex, which is involved in assembly and insertion of beta-barrel proteins into the outer membrane. The protein is Outer membrane protein assembly factor BamB of Shewanella oneidensis (strain ATCC 700550 / JCM 31522 / CIP 106686 / LMG 19005 / NCIMB 14063 / MR-1).